Consider the following 326-residue polypeptide: MLSPIRTTFHNSVNIVQSSPCQTVSFAGKEYELKVIDEKTPILFQWFEPNPERYKKDEVPIVNTKQHPYLDNVTNAARIESDRMIGIFVDGDFSVNQKTAFSKLERDFENVMIIYREDVDFSMYDRKLSDIYHDIICEQRLRTEDKRDEYLLNLLEKELREISKAQDSLISMYAKKRNHAWFDFFRNLALLKAGEIFRCTYNTKNHGISFGEGGIYLDMDMILTGKLGTIYAPDGISMHVDRRNDSVNIENSAIIVNRSNHPALLEGLSFMHSKVDAHPYYDGLGKGVKKYFNFTPLHNYNHFCDFIEFNHPNIIMNTSQYTCSSW.

UDP-N-acetyl-alpha-D-glucosamine is bound by residues 45–47 (QWF), tyrosine 69, and 216–219 (YLDM). The DXD motif motif lies at 218-220 (DMD). Position 220 (aspartate 220) interacts with Mn(2+). Glutamate 250 functions as the Proton acceptor in the catalytic mechanism. 2 residues coordinate Mn(2+): asparagine 317 and serine 319. UDP-N-acetyl-alpha-D-glucosamine is bound by residues serine 319 and 324–326 (SSW).

The protein belongs to the glycosyltransferase NleB family. Requires Mn(2+) as cofactor.

The protein resides in the secreted. It is found in the host cell. The catalysed reaction is L-arginyl-[protein] + UDP-N-acetyl-alpha-D-glucosamine = N(omega)-(N-acetyl-beta-D-glucosaminyl)-L-arginyl-[protein] + UDP + H(+). Protein-arginine N-acetylglucosaminyltransferase effector that catalyzes the transfer of a single N-acetylglucosamine (GlcNAc) to a conserved arginine residue of host target proteins. In contrast to NleB1, not able to disrupt TNF signaling in infected cells. Shows a lower enzymatic activity than NleB1. This is Protein-arginine N-acetylglucosaminyltransferase NleB2 from Escherichia coli O145:H28 (strain RM12581).